A 323-amino-acid chain; its full sequence is tRNA U34 carboxymethyltransferase (323 aa).

Residues Lys91, Trp105, Lys110, Gly130, 181–182 (IE), Met196, Tyr200, and Arg315 each bind carboxy-S-adenosyl-L-methionine.

The protein belongs to the class I-like SAM-binding methyltransferase superfamily. CmoB family. In terms of assembly, homotetramer.

The enzyme catalyses carboxy-S-adenosyl-L-methionine + 5-hydroxyuridine(34) in tRNA = 5-carboxymethoxyuridine(34) in tRNA + S-adenosyl-L-homocysteine + H(+). Catalyzes carboxymethyl transfer from carboxy-S-adenosyl-L-methionine (Cx-SAM) to 5-hydroxyuridine (ho5U) to form 5-carboxymethoxyuridine (cmo5U) at position 34 in tRNAs. The protein is tRNA U34 carboxymethyltransferase of Yersinia pseudotuberculosis serotype O:3 (strain YPIII).